A 339-amino-acid chain; its full sequence is Nicotinate-nucleotide--dimethylbenzimidazole phosphoribosyltransferase (339 aa).

The Proton acceptor role is filled by glutamate 306.

Belongs to the CobT family.

The catalysed reaction is 5,6-dimethylbenzimidazole + nicotinate beta-D-ribonucleotide = alpha-ribazole 5'-phosphate + nicotinate + H(+). The protein operates within nucleoside biosynthesis; alpha-ribazole biosynthesis; alpha-ribazole from 5,6-dimethylbenzimidazole: step 1/2. In terms of biological role, catalyzes the synthesis of alpha-ribazole-5'-phosphate from nicotinate mononucleotide (NAMN) and 5,6-dimethylbenzimidazole (DMB). This Brucella anthropi (strain ATCC 49188 / DSM 6882 / CCUG 24695 / JCM 21032 / LMG 3331 / NBRC 15819 / NCTC 12168 / Alc 37) (Ochrobactrum anthropi) protein is Nicotinate-nucleotide--dimethylbenzimidazole phosphoribosyltransferase.